Consider the following 562-residue polypeptide: NRAMP-like transporter smf-1 (562 aa).

Topologically, residues 1-55 (MASSNNDGPIEPEAEPWRITQNDHLEQDLLEEDAESQERVDIPVDDVEKAFSFKK) are cytoplasmic. The chain crosses the membrane as a helical span at residues 56–76 (LWAFTGPGFLMSIAYLDPGNI). The Extracellular segment spans residues 77–83 (ESDLQSG). The chain crosses the membrane as a helical span at residues 84–104 (AQAAYKLLWVLLSAHIIGMLL). The Cytoplasmic segment spans residues 105–140 (QRMSARLGVVSGKHMAEVAYQFYPRLPRIILWLMIE). A helical membrane pass occupies residues 141–161 (IAIVCSDMQEVIGTAIAIFLL). Residues 162–164 (SKG) are Extracellular-facing. Residues 165-185 (FVPLYVGVFITILDTFTFLLI) traverse the membrane as a helical segment. Residues 186-194 (DRYGIRKLE) are Cytoplasmic-facing. A helical transmembrane segment spans residues 195 to 215 (LIFGFLILTMTVSFGYEFVVV). The Extracellular portion of the chain corresponds to 216 to 241 (KPPIGEVISGMVVPWCAGCGKGEFMQ). A helical membrane pass occupies residues 242 to 262 (AISVVGAVIMPHNLYLHSALV). The Cytoplasmic segment spans residues 263-287 (KSRRVDRKDRRRVAEANKYFTLESA). A helical membrane pass occupies residues 288–308 (IALFLSFFINLFVVAVFAHGL). At 309–347 (YQKTNADVREMCIARHDIPDADIFPNNTEPVEVDIYKGG) the chain is on the extracellular side. An N-linked (GlcNAc...) asparagine glycan is attached at Asn-334. The chain crosses the membrane as a helical span at residues 348–368 (IYLGCQFGAIAMFIWGIGIFA). Residues 369–398 (AGQSSTMTGTYTGQFVMEGFVKIEWPKWKR) lie on the Cytoplasmic side of the membrane. A helical membrane pass occupies residues 399-419 (VLITRAIAITPTLVLTFYSQG). The Extracellular segment spans residues 420-428 (VQNLTGMND). N-linked (GlcNAc...) asparagine glycosylation occurs at Asn-422. The helical transmembrane segment at 429–449 (FLNCVQMIQLPFALIPIITFT) threads the bilayer. Residues 450 to 462 (SSRKIMHDFRSSK) are Cytoplasmic-facing. A helical membrane pass occupies residues 463–483 (VFQIFALITSALILSINVYFI). At 484-496 (SDYVFSRLGSEWY) the chain is on the extracellular side. Residues 497–517 (IIMVLAPITFAYVLFVLYLAL) form a helical membrane-spanning segment. Over 518-562 (YCLVSCEIIPDTVSIRGFSFNKSYENDAPWLAVDSSAVHDNAGYQ) the chain is Cytoplasmic.

This sequence belongs to the NRAMP family. As to expression, expressed in dopaminergic neurons (at protein level). Expressed predominantly in anterior and posterior intestine, rectal gland cell, H-shaped excretory cell, vulva cells, proximal uterus and spermatheca in adults. Weakly expressed in hyp7 hypodermis, pharyngeal muscles and some anterior sensory, ring and posterior head neurons in adults. Expressed in the anchor cell at the larval stage.

It localises to the apical cell membrane. It is found in the cytoplasmic vesicle membrane. Its function is as follows. Probable divalent metal ion transporter which regulates Mn(2+) uptake. The sequence is that of NRAMP-like transporter smf-1 (smf-1) from Caenorhabditis elegans.